The following is a 308-amino-acid chain: Coenzyme PQQ synthesis protein B (308 aa).

This sequence belongs to the PqqB family.

It participates in cofactor biosynthesis; pyrroloquinoline quinone biosynthesis. Functionally, may be involved in the transport of PQQ or its precursor to the periplasm. This is Coenzyme PQQ synthesis protein B from Rhodopseudomonas palustris (strain BisB5).